The primary structure comprises 296 residues: Thioredoxin-related transmembrane protein 2 (296 aa).

Positions 1-48 are cleaved as a signal peptide; sequence MAVLAPLIALVYSVPRLSRWLAQPYYLLSALLSAAFLLVRKLPPLCHG. The Extracellular segment spans residues 49-102; that stretch reads LPTQREDGNPCDFDWREVEILMFLSAIVMMKNRRSITVEQHIGNIFMFSKVANA. The chain crosses the membrane as a helical span at residues 103–125; it reads ILFFRLDIRMGLLYITLCIVFLM. The 156-residue stretch at 114–269 folds into the Thioredoxin domain; that stretch reads LLYITLCIVF…LYQRAKKLSK (156 aa). Residues 126-296 are Cytoplasmic-facing; the sequence is TCKPPLYMGP…VSDGESKKDK (171 aa). Phosphoserine is present on residues serine 211, serine 243, and serine 288. Residues 269–296 are disordered; the sequence is KAGDNIPEEQPVAPTPTRVSDGESKKDK. The Di-lysine motif signature appears at 293-296; that stretch reads KKDK.

Monomer. Homodimer; disulfide-linked. Occurs in both reduced and oxidized monomeric form. Oxidative conditions increase homodimerization. Interacts with CANX. Interacts with ATP2A2.

It is found in the endoplasmic reticulum membrane. The protein resides in the mitochondrion membrane. Functionally, endoplasmic reticulum and mitochondria-associated protein that probably functions as a regulator of cellular redox state and thereby regulates protein post-translational modification, protein folding and mitochondrial activity. Indirectly regulates neuronal proliferation, migration, and organization in the developing brain. In Macaca fascicularis (Crab-eating macaque), this protein is Thioredoxin-related transmembrane protein 2 (TMX2).